Here is a 434-residue protein sequence, read N- to C-terminus: Glutamine synthetase leaf isozyme, chloroplastic (434 aa).

2 disordered regions span residues 1-33 (MQVR…ARQP) and 101-126 (TISK…GQAP). Residues 1–54 (MQVRRDDDGAGGCAGDAVPGGGEGQDGVPARQPAGRVWGVSRAARATSGFKVLA) constitute a chloroplast transit peptide. Residues 10–25 (AGGCAGDAVPGGGEGQ) are compositionally biased toward gly residues. Residues 81 to 161 (IIAEYIWVGG…VICDTYTPQG (81 aa)) enclose the GS beta-grasp domain. The 267-residue stretch at 168–434 (KRHMAAQIFS…LAAKKLALKV (267 aa)) folds into the GS catalytic domain.

It belongs to the glutamine synthetase family. Homooctamer.

It localises to the plastid. The protein resides in the chloroplast. It catalyses the reaction L-glutamate + NH4(+) + ATP = L-glutamine + ADP + phosphate + H(+). Functionally, the light-modulated chloroplast enzyme, encoded by a nuclear gene and expressed primarily in leaves, is responsible for the reassimilation of the ammonia generated by photorespiration. This Hordeum vulgare (Barley) protein is Glutamine synthetase leaf isozyme, chloroplastic.